We begin with the raw amino-acid sequence, 438 residues long: Aspartic proteinase nepenthesin-2 (438 aa).

Positions 1-24 are cleaved as a signal peptide; that stretch reads MASPLYSVVLGLAIVSAIVAPTSS. Positions 25 to 79 are cleaved as a propeptide — activation peptide; sequence TSRGTLLHHGQKRPQPGLRVDLEQVDSGKNLTKYELIKRAIKRGERRMRSINAML. Residue N54 is glycosylated (N-linked (GlcNAc...) asparagine). Positions 96-431 constitute a Peptidase A1 domain; that stretch reads YLMNVAIGTP…DLQNLAVSFV (336 aa). Residue D114 is part of the active site. Disulfide bonds link C124–C127, C130–C204, C151–C169, C156–C164, C241–C435, and C354–C395. D315 is an active-site residue.

It belongs to the peptidase A1 family.

It localises to the secreted. It carries out the reaction Similar to pepsin, but also cleaves on either side of Asp and at Lys-|-Arg.. Inhibited by pepstatin and by diazoacetyl-D,L-norleucine methyl ester (DAN) in the presence of Cu(2+) ions. Extracellular proteinase found in the pitcher fluid of carnivorous plants. Digest prey for nitrogen uptake. In Nepenthes gracilis (Slender pitcher plant), this protein is Aspartic proteinase nepenthesin-2 (nep2).